The chain runs to 582 residues: Semenogelin-2 (582 aa).

A signal peptide spans 1 to 23 (MKSIILFVLSLLLILEKQAAVMG). Residues 24–59 (QKGGSKGQLPSGSSQFPHGQKGQHYFGQKDQQHTKS) are disordered. The span at 31 to 40 (QLPSGSSQFP) shows a compositional bias: polar residues. 3 consecutive repeat copies span residues 70 to 129 (HVDI…IVIH), 141 to 200 (NPSQ…QTEE), and 201 to 260 (LVVN…QDEL). The repeat-rich region stretch occupies residues 70-559 (HVDINDHDWT…SSESHNIVIT (490 aa)). Disordered stretches follow at residues 132–160 (GGQA…SQCS), 173–194 (KEQA…QSSY), 228–248 (EEHS…RLQH), and 269–582 (QTKN…PIST). Polar residues-rich tracts occupy residues 137 to 160 (HGTQ…SQCS) and 174 to 194 (EQAS…QSSY). A 4 X 60 AA tandem repeats, type I region spans residues 261-500 (LVYNKNQHQT…QSSISFQIEK (240 aa)). N-linked (GlcNAc...) asparagine glycosylation occurs at N272. The span at 292 to 310 (RTEERQLHHGEKSVQKDVS) shows a compositional bias: basic and acidic residues. The segment covering 325–334 (KSQNQVTIHS) has biased composition (polar residues). Residues 335–345 (QDQEHGHKENK) show a composition bias toward basic and acidic residues. Over residues 372-397 (GSISIQTEEQIHGKSQNQVRIPSQAQ) the composition is skewed to polar residues. Over residues 413 to 426 (TEERRLNSGEKDVQ) the composition is skewed to basic and acidic residues. Residues 445–455 (KSQNQVTIPSQ) show a composition bias toward polar residues. A compositionally biased stretch (basic and acidic residues) spans 456-465 (DQEHGHKENK). 2 stretches are compositionally biased toward polar residues: residues 482–496 (GKST…SISF) and 506–532 (SQIQ…QSAD). Residues 501 to 559 (LVEGKSQIQTPNPNQDQWSGQNAKGKSGQSADSKQDLLSHEQKGRYKQESSESHNIVIT) form a 3-2 repeat. Composition is skewed to basic and acidic residues over residues 533–552 (SKQD…ESSE) and 559–582 (TEHE…PIST).

It belongs to the semenogelin family. Interacts with SERPINA5. In terms of processing, semenogelin-2 is thought to form both the 71 kDa polypeptide and, in its glycosylated form, the 76 kDa polypeptide. In terms of tissue distribution, seminal vesicles, and to a much lesser extent, epididymis.

It localises to the secreted. In terms of biological role, participates in the formation of a gel matrix (sperm coagulum) entrapping the accessory gland secretions and ejaculated spermatozoa. This chain is Semenogelin-2 (SEMG2), found in Homo sapiens (Human).